Consider the following 296-residue polypeptide: Stanniocalcin-2 (296 aa).

A signal peptide spans 1–24; that stretch reads MCAERLGQFVTLALVFATLDPAQG. Residues 21–44 are disordered; sequence PAQGTDSTNPPEGPQDRSSQQKGR. Positions 24 to 44 are enriched in polar residues; that stretch reads GTDSTNPPEGPQDRSSQQKGR. N-linked (GlcNAc...) asparagine glycosylation is present at Asn-73. The tract at residues 218–296 is disordered; it reads PPTAAPEHQP…EQSEYSDIRR (79 aa). A compositionally biased stretch (basic and acidic residues) spans 240–258; the sequence is RDTDHHLTANRGAKGERGS. Over residues 272–282 the composition is skewed to low complexity; the sequence is GQSAQGPSGSS.

The protein belongs to the stanniocalcin family. As to quaternary structure, homodimer; disulfide-linked. Found in a variety of tissues including skeletal muscle, small intestine, kidney, liver and brain.

It localises to the secreted. Has an anti-hypocalcemic action on calcium and phosphate homeostasis. This chain is Stanniocalcin-2 (Stc2), found in Mus musculus (Mouse).